The chain runs to 377 residues: D-alanine--D-alanine ligase (377 aa).

One can recognise an ATP-grasp domain in the interval 141 to 347; sequence KRILNQAGIR…YSELIDRLIQ (207 aa). 171–226 is a binding site for ATP; it reads KEELGDLVFVKPAKQGSSVGIHKVDTEEEYETAMKDAFTYDYKVLVEAGIKNPREI. Residues Asp-301, Glu-314, and Asn-316 each coordinate Mg(2+).

Belongs to the D-alanine--D-alanine ligase family. The cofactor is Mg(2+). Mn(2+) serves as cofactor.

Its subcellular location is the cytoplasm. The enzyme catalyses 2 D-alanine + ATP = D-alanyl-D-alanine + ADP + phosphate + H(+). It participates in cell wall biogenesis; peptidoglycan biosynthesis. Functionally, cell wall formation. This is D-alanine--D-alanine ligase from Limosilactobacillus fermentum (strain NBRC 3956 / LMG 18251) (Lactobacillus fermentum).